Here is a 340-residue protein sequence, read N- to C-terminus: N-acetyl-gamma-glutamyl-phosphate reductase (340 aa).

Cys-146 is an active-site residue.

It belongs to the NAGSA dehydrogenase family. Type 1 subfamily.

Its subcellular location is the cytoplasm. It catalyses the reaction N-acetyl-L-glutamate 5-semialdehyde + phosphate + NADP(+) = N-acetyl-L-glutamyl 5-phosphate + NADPH + H(+). The protein operates within amino-acid biosynthesis; L-arginine biosynthesis; N(2)-acetyl-L-ornithine from L-glutamate: step 3/4. Its function is as follows. Catalyzes the NADPH-dependent reduction of N-acetyl-5-glutamyl phosphate to yield N-acetyl-L-glutamate 5-semialdehyde. This is N-acetyl-gamma-glutamyl-phosphate reductase from Rubrobacter xylanophilus (strain DSM 9941 / JCM 11954 / NBRC 16129 / PRD-1).